Reading from the N-terminus, the 122-residue chain is Large ribosomal subunit protein uL14 (122 aa).

The protein belongs to the universal ribosomal protein uL14 family. As to quaternary structure, part of the 50S ribosomal subunit. Forms a cluster with proteins L3 and L19. In the 70S ribosome, L14 and L19 interact and together make contacts with the 16S rRNA in bridges B5 and B8.

Functionally, binds to 23S rRNA. Forms part of two intersubunit bridges in the 70S ribosome. In Azoarcus sp. (strain BH72), this protein is Large ribosomal subunit protein uL14.